Reading from the N-terminus, the 121-residue chain is Prefoldin subunit beta (121 aa).

The protein belongs to the prefoldin subunit beta family. In terms of assembly, heterohexamer of two alpha and four beta subunits.

The protein resides in the cytoplasm. Its function is as follows. Molecular chaperone capable of stabilizing a range of proteins. Seems to fulfill an ATP-independent, HSP70-like function in archaeal de novo protein folding. This chain is Prefoldin subunit beta, found in Caldivirga maquilingensis (strain ATCC 700844 / DSM 13496 / JCM 10307 / IC-167).